Here is a 204-residue protein sequence, read N- to C-terminus: LexA repressor (204 aa).

A DNA-binding region (H-T-H motif) is located at residues 29-49 (VREIGDAVGLMSSSTVHGHLQ). Catalysis depends on for autocatalytic cleavage activity residues serine 127 and lysine 164.

It belongs to the peptidase S24 family. Homodimer.

The enzyme catalyses Hydrolysis of Ala-|-Gly bond in repressor LexA.. In terms of biological role, represses a number of genes involved in the response to DNA damage (SOS response), including recA and lexA. In the presence of single-stranded DNA, RecA interacts with LexA causing an autocatalytic cleavage which disrupts the DNA-binding part of LexA, leading to derepression of the SOS regulon and eventually DNA repair. The polypeptide is LexA repressor (Desulfitobacterium hafniense (strain DSM 10664 / DCB-2)).